A 364-amino-acid chain; its full sequence is Mitogen-activated protein kinase 11 (364 aa).

The Protein kinase domain occupies 24–308 (LQGLRPVGSG…AAEALAHAYF (285 aa)). Residues 30–38 (VGSGAYGSV) and Lys53 contribute to the ATP site. Glu71 provides a ligand contact to nilotinib. The Proton acceptor role is filled by Asp150. Thr180 carries the post-translational modification Phosphothreonine; by MAP2K3, MAP2K4 and MAP2K6. Positions 180–182 (TGY) match the TXY motif. Residue Tyr182 is modified to Phosphotyrosine; by MAP2K3, MAP2K4 and MAP2K6. Disordered regions lie at residues 311–331 (YHDP…EAKE) and 343–364 (QEVL…EIEQ). Over residues 314 to 326 (PEDEPEAEPYDES) the composition is skewed to acidic residues. A Phosphotyrosine; by ZAP70 modification is found at Tyr323.

Belongs to the protein kinase superfamily. CMGC Ser/Thr protein kinase family. MAP kinase subfamily. In terms of assembly, interacts with HDAC3 and DUSP16. Mg(2+) serves as cofactor. Dually phosphorylated on Thr-180 and Tyr-182 by MAP2K3/MKK3, MAP2K4/MKK4 and MAP2K6/MKK6, which activates the enzyme. Highest levels in the brain and heart. Also expressed in the placenta, lung, liver, skeletal muscle, kidney and pancreas.

The protein localises to the cytoplasm. The protein resides in the nucleus. The enzyme catalyses L-seryl-[protein] + ATP = O-phospho-L-seryl-[protein] + ADP + H(+). The catalysed reaction is L-threonyl-[protein] + ATP = O-phospho-L-threonyl-[protein] + ADP + H(+). Activated by phosphorylation on threonine and tyrosine by MAP2K3/MKK3, MAP2K4/MKK4 and MAP2K6/MKK6. MAP2K3/MKK3 and MAP2K6/MKK6 are both essential for the activation of MAPK11 induced by environmental stress. HDAC3 interacts directly and selectively with MAPK11 to repress ATF2 transcriptional activity, and regulate TNF gene expression in LPS-stimulated cells. Inhibited by SB203580 and pyridinyl-imidazole related compounds. In terms of biological role, serine/threonine kinase which acts as an essential component of the MAP kinase signal transduction pathway. MAPK11 is one of the four p38 MAPKs which play an important role in the cascades of cellular responses evoked by extracellular stimuli such as pro-inflammatory cytokines or physical stress leading to direct activation of transcription factors. Accordingly, p38 MAPKs phosphorylate a broad range of proteins and it has been estimated that they may have approximately 200 to 300 substrates each. MAPK11 functions are mostly redundant with those of MAPK14. Some of the targets are downstream kinases which are activated through phosphorylation and further phosphorylate additional targets. RPS6KA5/MSK1 and RPS6KA4/MSK2 can directly phosphorylate and activate transcription factors such as CREB1, ATF1, the NF-kappa-B isoform RELA/NFKB3, STAT1 and STAT3, but can also phosphorylate histone H3 and the nucleosomal protein HMGN1. RPS6KA5/MSK1 and RPS6KA4/MSK2 play important roles in the rapid induction of immediate-early genes in response to stress or mitogenic stimuli, either by inducing chromatin remodeling or by recruiting the transcription machinery. On the other hand, two other kinase targets, MAPKAPK2/MK2 and MAPKAPK3/MK3, participate in the control of gene expression mostly at the post-transcriptional level, by phosphorylating ZFP36 (tristetraprolin) and ELAVL1, and by regulating EEF2K, which is important for the elongation of mRNA during translation. MKNK1/MNK1 and MKNK2/MNK2, two other kinases activated by p38 MAPKs, regulate protein synthesis by phosphorylating the initiation factor EIF4E2. In the cytoplasm, the p38 MAPK pathway is an important regulator of protein turnover. For example, CFLAR is an inhibitor of TNF-induced apoptosis whose proteasome-mediated degradation is regulated by p38 MAPK phosphorylation. Ectodomain shedding of transmembrane proteins is regulated by p38 MAPKs as well. In response to inflammatory stimuli, p38 MAPKs phosphorylate the membrane-associated metalloprotease ADAM17. Such phosphorylation is required for ADAM17-mediated ectodomain shedding of TGF-alpha family ligands, which results in the activation of EGFR signaling and cell proliferation. Additional examples of p38 MAPK substrates are the FGFR1. FGFR1 can be translocated from the extracellular space into the cytosol and nucleus of target cells, and regulates processes such as rRNA synthesis and cell growth. FGFR1 translocation requires p38 MAPK activation. In the nucleus, many transcription factors are phosphorylated and activated by p38 MAPKs in response to different stimuli. Classical examples include ATF1, ATF2, ATF6, ELK1, PTPRH, DDIT3, TP53/p53 and MEF2C and MEF2A. The p38 MAPKs are emerging as important modulators of gene expression by regulating chromatin modifiers and remodelers. The promoters of several genes involved in the inflammatory response, such as IL6, IL8 and IL12B, display a p38 MAPK-dependent enrichment of histone H3 phosphorylation on 'Ser-10' (H3S10ph) in LPS-stimulated myeloid cells. This phosphorylation enhances the accessibility of the cryptic NF-kappa-B-binding sites marking promoters for increased NF-kappa-B recruitment. Phosphorylates NLRP1 downstream of MAP3K20/ZAK in response to UV-B irradiation and ribosome collisions, promoting activation of the NLRP1 inflammasome and pyroptosis. Phosphorylates methyltransferase DOT1L on 'Ser-834', 'Thr-900', 'Ser-902', 'Thr-984', 'Ser-1001', 'Ser-1009' and 'Ser-1104'. In Homo sapiens (Human), this protein is Mitogen-activated protein kinase 11 (MAPK11).